Here is a 218-residue protein sequence, read N- to C-terminus: Calcineurin B-like protein 5 (218 aa).

4 consecutive EF-hand domains span residues 35-69 (EVEA…FRNK), 70-105 (KTNL…FHPD), 107-142 (PEEQ…LLDE), and 151-186 (AVEM…NPYV).

The protein belongs to the calcineurin regulatory subunit family. In terms of assembly, homodimer. As to expression, expressed at low levels in roots, shoots, culms, leaves and young spikelets.

Acts as a calcium sensor. CBL proteins interact with CIPK serine-threonine protein kinases. Binding of a CBL protein to the regulatory NAF domain of a CIPK protein lead to the activation of the kinase in a calcium-dependent manner. This is Calcineurin B-like protein 5 (CBL5) from Oryza sativa subsp. japonica (Rice).